We begin with the raw amino-acid sequence, 193 residues long: Protein PrsJ (193 aa).

The signal sequence occupies residues 1–27; that stretch reads MVVNKTTAVLYLIALSLSGFIHTFLRA.

The protein localises to the periplasm. Its function is as follows. This protein maintains pilus integrity and thus is an important participant in pilus assembly. It may function as molecular chaperone directly or indirectly in the correct assembly of PapA subunits. The protein is Protein PrsJ (prsJ) of Escherichia coli.